A 268-amino-acid chain; its full sequence is Testis-specific serine/threonine-protein kinase 3 (268 aa).

The 256-residue stretch at tyrosine 10–leucine 265 folds into the Protein kinase domain. ATP contacts are provided by residues isoleucine 16 to valine 24 and lysine 39. Residue aspartate 134 is the Proton acceptor of the active site. Serine 166 carries the phosphoserine; by autocatalysis modification. Phosphothreonine; by PDPK1 is present on threonine 168.

The protein belongs to the protein kinase superfamily. CAMK Ser/Thr protein kinase family. It depends on Mg(2+) as a cofactor. Requires Mn(2+) as cofactor. Autophosphorylated at Ser-166. Phosphorylation at Thr-168 by PDPK1 activates the serine/threonine protein kinase activity. As to expression, developmentally expressed in testicular germ cells. In adult testis, expression was detected in round and condensing spermatids, but not in meiotic pachytene spermatocytes. Not expressed in brain, ovary, kidney, liver or early embryonic cells.

Its subcellular location is the cell projection. It localises to the cilium. It is found in the flagellum. It catalyses the reaction L-seryl-[protein] + ATP = O-phospho-L-seryl-[protein] + ADP + H(+). The catalysed reaction is L-threonyl-[protein] + ATP = O-phospho-L-threonyl-[protein] + ADP + H(+). Activated by phosphorylation on Thr-168 by PDPK1. Functionally, serine/threonine protein kinase required for spermatid development and male fertility. This chain is Testis-specific serine/threonine-protein kinase 3, found in Mus musculus (Mouse).